The sequence spans 451 residues: Opioid growth factor receptor-like protein 1 (451 aa).

Disordered regions lie at residues 1 to 89 (MGNL…TAKP) and 308 to 451 (ENFI…VLVQ). Low complexity predominate over residues 43 to 66 (PGQESEQPAQPPEQAGGRPGASPA). Residues 322–341 (GSKAQKMSSPLASSHNSQTS) show a composition bias toward polar residues. Basic and acidic residues-rich tracts occupy residues 362–381 (TAED…DRPS) and 389–399 (AKPRNTEKDSN). Residues 431–443 (NDNQDNENPGNTN) show a composition bias toward low complexity.

The protein belongs to the opioid growth factor receptor family. Ubiquitous.

This is Opioid growth factor receptor-like protein 1 (OGFRL1) from Homo sapiens (Human).